The following is a 477-amino-acid chain: Aspartyl/glutamyl-tRNA(Asn/Gln) amidotransferase subunit B (477 aa).

It belongs to the GatB/GatE family. GatB subfamily. In terms of assembly, heterotrimer of A, B and C subunits.

It catalyses the reaction L-glutamyl-tRNA(Gln) + L-glutamine + ATP + H2O = L-glutaminyl-tRNA(Gln) + L-glutamate + ADP + phosphate + H(+). It carries out the reaction L-aspartyl-tRNA(Asn) + L-glutamine + ATP + H2O = L-asparaginyl-tRNA(Asn) + L-glutamate + ADP + phosphate + 2 H(+). Functionally, allows the formation of correctly charged Asn-tRNA(Asn) or Gln-tRNA(Gln) through the transamidation of misacylated Asp-tRNA(Asn) or Glu-tRNA(Gln) in organisms which lack either or both of asparaginyl-tRNA or glutaminyl-tRNA synthetases. The reaction takes place in the presence of glutamine and ATP through an activated phospho-Asp-tRNA(Asn) or phospho-Glu-tRNA(Gln). The sequence is that of Aspartyl/glutamyl-tRNA(Asn/Gln) amidotransferase subunit B from Legionella pneumophila (strain Paris).